Here is a 769-residue protein sequence, read N- to C-terminus: Non-secreted LysM effector LysM17 (769 aa).

The helical transmembrane segment at 173–193 threads the bilayer; the sequence is LPPLATAIPLAVVWASLASVI. Residues Asn-305, Asn-368, Asn-423, and Asn-452 are each glycosylated (N-linked (GlcNAc...) asparagine). LysM domains lie at 498–543 and 562–610; these read RTIQ…HVCC and YSNL…KICL. Residues Asn-631, Asn-671, Asn-706, and Asn-734 are each glycosylated (N-linked (GlcNAc...) asparagine).

Belongs to the secreted LysM effector family.

The protein localises to the membrane. In terms of biological role, non-secreted LysM effector that might be involved in manipulation of host defenses for successful infection. This chain is Non-secreted LysM effector LysM17, found in Penicillium expansum (Blue mold rot fungus).